A 397-amino-acid polypeptide reads, in one-letter code: Ribosomal RNA large subunit methyltransferase I (397 aa).

The PUA domain occupies 2 to 80; sequence SAAIYLVKGR…QDINRAFFVK (79 aa).

It belongs to the methyltransferase superfamily. RlmI family.

It localises to the cytoplasm. It carries out the reaction cytidine(1962) in 23S rRNA + S-adenosyl-L-methionine = 5-methylcytidine(1962) in 23S rRNA + S-adenosyl-L-homocysteine + H(+). Its function is as follows. Specifically methylates the cytosine at position 1962 (m5C1962) of 23S rRNA. The polypeptide is Ribosomal RNA large subunit methyltransferase I (Vibrio vulnificus (strain CMCP6)).